We begin with the raw amino-acid sequence, 90 residues long: QDEVGLGSCSVIFVVGNEEGEAKDGYAVGGDRCRVRCSPLGKNKDCETACRKKAGSYYGYCYLWFCYCENVSESAVVWGNPTLGPCLSDG.

Positions 1–22 (QDEVGLGSCSVIFVVGNEEGEA) are cleaved as a signal peptide. Positions 23–87 (KDGYAVGGDR…WGNPTLGPCL (65 aa)) constitute an LCN-type CS-alpha/beta domain. Intrachain disulfides connect Cys-33-Cys-86, Cys-37-Cys-61, Cys-46-Cys-66, and Cys-50-Cys-68.

It belongs to the long (4 C-C) scorpion toxin superfamily. Sodium channel inhibitor family. Expressed by the venom gland.

It localises to the secreted. Its function is as follows. Putative sodium channel toxin. This is Putative sodium channel toxin Ts35 from Tityus serrulatus (Brazilian scorpion).